The primary structure comprises 204 residues: Thymidylate kinase (204 aa).

11 to 18 (GLDKSGKT) is a binding site for ATP.

Belongs to the thymidylate kinase family.

The enzyme catalyses dTMP + ATP = dTDP + ADP. It participates in pyrimidine metabolism; dTTP biosynthesis. This Camelus protein is Thymidylate kinase (TMK).